We begin with the raw amino-acid sequence, 299 residues long: Probable GTP 3',8-cyclase (299 aa).

In terms of domain architecture, Radical SAM core spans 4-229; sequence LHNREIKSLR…MQNRKKYLVD (226 aa). Arginine 13 contributes to the GTP binding site. [4Fe-4S] cluster is bound by residues cysteine 20 and cysteine 24. Tyrosine 26 serves as a coordination point for S-adenosyl-L-methionine. Position 27 (cysteine 27) interacts with [4Fe-4S] cluster. Lysine 61 contributes to the GTP binding site. Position 65 (glycine 65) interacts with S-adenosyl-L-methionine. Threonine 94 provides a ligand contact to GTP. Serine 118 is a binding site for S-adenosyl-L-methionine. Lysine 154 provides a ligand contact to GTP. 2 residues coordinate [4Fe-4S] cluster: cysteine 245 and cysteine 248. 250–252 is a GTP binding site; it reads RIR. Cysteine 262 contributes to the [4Fe-4S] cluster binding site.

The protein belongs to the radical SAM superfamily. MoaA family. [4Fe-4S] cluster is required as a cofactor.

The enzyme catalyses GTP + AH2 + S-adenosyl-L-methionine = (8S)-3',8-cyclo-7,8-dihydroguanosine 5'-triphosphate + 5'-deoxyadenosine + L-methionine + A + H(+). Its pathway is cofactor biosynthesis; molybdopterin biosynthesis. Catalyzes the cyclization of GTP to (8S)-3',8-cyclo-7,8-dihydroguanosine 5'-triphosphate. In Methanococcus aeolicus (strain ATCC BAA-1280 / DSM 17508 / OCM 812 / Nankai-3), this protein is Probable GTP 3',8-cyclase.